A 195-amino-acid chain; its full sequence is UMP-CMP kinase (195 aa).

ATP is bound at residue 17–22 (GSGKGT). The interval 37–66 (SAGDLLRQEQQSGSKDGEMIATMIKNGEIV) is NMP. Residues R43, 64–66 (EIV), and 91–94 (GFPR) each bind a ribonucleoside 5'-phosphate. Position 98 (N98) interacts with CMP. Residues 131–141 (KRGESSGRSDD) form an LID region. Residue R132 coordinates ATP. A ribonucleoside 5'-phosphate contacts are provided by R138 and R149. R177 is a binding site for ATP.

This sequence belongs to the adenylate kinase family. UMP-CMP kinase subfamily. Monomer. Requires Mg(2+) as cofactor.

It localises to the cytoplasm. The protein resides in the nucleus. The enzyme catalyses CMP + ATP = CDP + ADP. It carries out the reaction dCMP + ATP = dCDP + ADP. It catalyses the reaction UMP + ATP = UDP + ADP. Its function is as follows. Catalyzes the phosphorylation of pyrimidine nucleoside monophosphates at the expense of ATP. Plays an important role in de novo pyrimidine nucleotide biosynthesis. Has preference for UMP and CMP as phosphate acceptors. This chain is UMP-CMP kinase, found in Dictyostelium discoideum (Social amoeba).